Consider the following 589-residue polypeptide: Putative sphingomyelin phosphodiesterase asm-3 (589 aa).

A signal peptide spans 1–17; that stretch reads MLLGLLVLSLAFQGTLA. One can recognise a Saposin B-type domain in the interval 18 to 101; the sequence is VTECEECKSI…LMKNDCGDFV (84 aa). Intrachain disulfides connect Cys21-Cys97, Cys24-Cys89, and Cys52-Cys63. N-linked (GlcNAc...) asparagine glycosylation is present at Asn109. 2 residues coordinate Zn(2+): Asp139 and His141. 2 disulfide bridges follow: Cys154–Cys159 and Cys160–Cys188. Residue Asp217 participates in Zn(2+) binding. Asn237 carries an N-linked (GlcNAc...) asparagine glycan. Asn257 is a binding site for Zn(2+). N-linked (GlcNAc...) asparagine glycosylation occurs at Asn334. Zn(2+)-binding residues include His364, His398, and His400. A glycan (N-linked (GlcNAc...) asparagine) is linked at Asn463. 2 disulfides stabilise this stretch: Cys530/Cys535 and Cys541/Cys553. Residues 562–589 form a disordered region; that stretch reads KPEPKKNKYSARFATSNERRRGKEECKI. Over residues 578 to 589 the composition is skewed to basic and acidic residues; that stretch reads NERRRGKEECKI.

Belongs to the acid sphingomyelinase family. Zn(2+) is required as a cofactor.

It is found in the secreted. The catalysed reaction is an N-(acyl)-sphingosylphosphocholine + H2O = an N-acyl-sphingoid base + phosphocholine + H(+). It catalyses the reaction a sphingomyelin + H2O = phosphocholine + an N-acylsphing-4-enine + H(+). The enzyme catalyses an N-acyl-15-methylhexadecasphing-4-enine-1-phosphocholine + H2O = an N-acyl-15-methylhexadecasphing-4-enine + phosphocholine + H(+). The protein operates within lipid metabolism; sphingolipid metabolism. Functionally, converts sphingomyelin to ceramide (N-acyl-sphingoid base) and phosphocholine. C.elegans contain specific sphingoid bases, which are unique or different in structure compared to the sphingoid bases found in other animals. Two examples of these distinctive compounds are: 15-methylhexadecasphinganine and 15-methylhexadecasphing-4-enine. This is Putative sphingomyelin phosphodiesterase asm-3 (asm-3) from Caenorhabditis elegans.